The chain runs to 457 residues: Cysteine desulfurase (457 aa).

Residues A127, T128, Q235, S255, and H257 each coordinate pyridoxal 5'-phosphate. K258 is modified (N6-(pyridoxal phosphate)lysine). T295 contacts pyridoxal 5'-phosphate. C381 acts as the Cysteine persulfide intermediate in catalysis. C381 is a [2Fe-2S] cluster binding site. Position 381 (C381) interacts with Zn(2+). C381 carries the cysteine persulfide modification.

The protein belongs to the class-V pyridoxal-phosphate-dependent aminotransferase family. NifS/IscS subfamily. In terms of assembly, homodimer. Component of the mitochondrial core iron-sulfur cluster (ISC) complex composed of NFS1, LYRM4, NDUFAB1, ISCU, FXN, and FDX2; this complex is a heterohexamer containing two copies of each monomer. Component of cyteine desulfurase complex composed of NFS1, LYRM4 and NDUFAB1; this complex contributes to the activation of cysteine desulfurase activity and NFS1 stabilization. Interacts (homodimer form) with ISCU (D-state); each monomer interacts with the C-terminal regions of each NFS1 monomer. Interacts with HSPA9. Interacts (via homodimer form) with FDX2. Interacts (via homodimer form) with FXN. Interacts with LYRM4. Component of a complex composed of FXN, NFS1, LYRM4 and ISCU. As to quaternary structure, monomer. Homodimer. Oligomer. Interacts with ISCU. Component of the cysteine desulfurase complex composed of NFS1 and LYRM4; this complex contributes to the activation of cysteine desulfurase activity. Interacts with MOCS3. It depends on pyridoxal 5'-phosphate as a cofactor. N-gluconoylated. Post-translationally, cysteine persulfide intermediate is reduced by thiol-containing molecules like glutathione and L-cysteine. Persulfide reduction is a rate-limiting step of cysteine desulfurase catalytic cycle.

It is found in the mitochondrion. Its subcellular location is the cytoplasm. It localises to the nucleus. The protein localises to the cytoskeleton. The protein resides in the microtubule organizing center. It is found in the centrosome. The catalysed reaction is (sulfur carrier)-H + L-cysteine = (sulfur carrier)-SH + L-alanine. It catalyses the reaction L-cysteinyl-[cysteine desulfurase] + L-cysteine = S-sulfanyl-L-cysteinyl-[cysteine desulfurase] + L-alanine. Active only in complex with LYRM4. Functionally, cysteine desulfurase, of the core iron-sulfur cluster (ISC) assembly complex, that catalyzes the desulfuration of L-cysteine to L-alanine, as component of the cysteine desulfurase complex leading to the formation of a cysteine persulfide intermediate at the active site cysteine residue and participates in the [2Fe-2S] clusters assembly on the scaffolding protein ISCU. The persulfide is then transferred on the flexible Cys loop from the catalytic site of NFS1 to the surface of NFS1. After the NFS1-linked persulfide sulfur is transferred to one of the conserved Cys residues of the scaffold, a reaction assisted by FXN. The core iron-sulfur cluster (ISC) assembly complex is involved in the de novo synthesis of a [2Fe-2S] cluster, the first step of the mitochondrial iron-sulfur protein biogenesis. This process is initiated by the cysteine desulfurase complex (NFS1:LYRM4:NDUFAB1) that produces persulfide which is delivered on the scaffold protein ISCU in a FXN-dependent manner. Then this complex is stabilized by FDX2 which provides reducing equivalents to accomplish the [2Fe-2S] cluster assembly. Finally, the [2Fe-2S] cluster is transferred from ISCU to chaperone proteins, including HSCB, HSPA9 and GLRX5. In terms of biological role, may catalyze the desulfuration of L-cysteine to L-alanine as component of the cysteine desulfurase complex (NFS1:LYRM4), leading to the formation of a cysteine persulfide intermediate. Acts as a sulfur donor for MOCS3 by transferring the sulfur of the cysteine persulfide intermediate on MOCS3. This chain is Cysteine desulfurase, found in Pongo abelii (Sumatran orangutan).